The following is a 151-amino-acid chain: Probable cyclic pyranopterin monophosphate synthase (151 aa).

Residues 66-68 and 102-103 contribute to the substrate site; these read MCH and ME. Aspartate 117 is a catalytic residue.

This sequence belongs to the MoaC family. In terms of assembly, homohexamer; trimer of dimers.

It carries out the reaction (8S)-3',8-cyclo-7,8-dihydroguanosine 5'-triphosphate = cyclic pyranopterin phosphate + diphosphate. It participates in cofactor biosynthesis; molybdopterin biosynthesis. Functionally, catalyzes the conversion of (8S)-3',8-cyclo-7,8-dihydroguanosine 5'-triphosphate to cyclic pyranopterin monophosphate (cPMP). The sequence is that of Probable cyclic pyranopterin monophosphate synthase from Sulfurisphaera tokodaii (strain DSM 16993 / JCM 10545 / NBRC 100140 / 7) (Sulfolobus tokodaii).